Here is a 174-residue protein sequence, read N- to C-terminus: MLTYGKPFNFQRWIDDHAHLLKPPVGNQQVWQDSDFIVTVVGGPNHRTDYHDDPLEEFFYQLRGNAYLHLWIDGKRERVDLKEGDVFLLPPHVRHSPQRPEAGSVCLVIERQRPAGVVDGFEWYCDACGHLVYRVEVQLKSIVSDLPPLFNAFYASEEKRRCGHCGHVHPGKAV.

Arg47 contacts O2. Fe cation-binding residues include His51, Glu57, and His95. Glu57 is a substrate binding site. The substrate site is built by Arg99 and Glu110. Fe cation-binding residues include Cys125, Cys128, Cys162, and Cys165.

Belongs to the 3-HAO family. Homodimer. Requires Fe(2+) as cofactor.

The enzyme catalyses 3-hydroxyanthranilate + O2 = (2Z,4Z)-2-amino-3-carboxymuconate 6-semialdehyde. Its pathway is cofactor biosynthesis; NAD(+) biosynthesis; quinolinate from L-kynurenine: step 3/3. Functionally, catalyzes the oxidative ring opening of 3-hydroxyanthranilate to 2-amino-3-carboxymuconate semialdehyde, which spontaneously cyclizes to quinolinate. This chain is 3-hydroxyanthranilate 3,4-dioxygenase, found in Paraburkholderia phytofirmans (strain DSM 17436 / LMG 22146 / PsJN) (Burkholderia phytofirmans).